The following is a 432-amino-acid chain: Luc7-like protein 3 (432 aa).

An N-acetylmethionine modification is found at Met-1. Ser-3, Ser-110, and Ser-115 each carry phosphoserine. Residues 124 to 181 (KNEEKIQVLTDKIDVLLQQIEELGSEGKVEEAQGMMKLVEQLKEERELLRSTTSTIES) are a coiled coil. An N6-acetyllysine modification is found at Lys-231. Residues 234–287 (LRKRTEEPDRDERLKKEKQEREEREKEREREREERERKRRREEEEREKERARDR) are compositionally biased toward basic and acidic residues. The disordered stretch occupies residues 234-432 (LRKRTEEPDR…IKSEGDTQSN (199 aa)). Basic residues predominate over residues 288-301 (ERRKRSRSRSRHSS). Residues 302-311 (RTSDRRCSRS) show a composition bias toward basic and acidic residues. The segment covering 312–367 (RDHKRSRSRERRRSRSRDRRRSRSHDRSERKHRSRSRDRRRSKSRDRKSYKHRSKS) has biased composition (basic residues). A compositionally biased stretch (basic and acidic residues) spans 368–414 (RDREQDRKSKEKEKRGSDDKKSSVKSGSREKQSEDTNTESKESDTKN). Ser-420 bears the Phosphoserine mark. The span at 421–432 (EDIKSEGDTQSN) shows a compositional bias: basic and acidic residues. A Glycyl lysine isopeptide (Lys-Gly) (interchain with G-Cter in SUMO1); alternate cross-link involves residue Lys-424. A Glycyl lysine isopeptide (Lys-Gly) (interchain with G-Cter in SUMO2); alternate cross-link involves residue Lys-424. Phosphoserine is present on residues Ser-425 and Ser-431.

It belongs to the Luc7 family. As to quaternary structure, may interact with SFRS1 and form homodimers. Interacts with JMJD6. Interacts with RBM25. Interacts with RSRC1 (via Arg/Ser-rich domain). Interacts with RRP1B. Post-translationally, phosphorylated in vitro by SRPK1, SRPK2 and CLK1. As to expression, widely expressed. Highest levels in heart, brain, pancreas, thymus, ovary, small intestine and peripheral blood leukocytes, as well as cerebellum, putamen and pituitary gland. Lowest levels in lung, liver and kidney. Also expressed in fetal tissues, including brain, heart, kidney, thymus and lung.

The protein localises to the nucleus speckle. Functionally, binds cAMP regulatory element DNA sequence. May play a role in RNA splicing. This chain is Luc7-like protein 3 (LUC7L3), found in Homo sapiens (Human).